Here is a 189-residue protein sequence, read N- to C-terminus: MAKIPYAILEKGSLLLASPDTDQGVFARSVILLCEHSLNGSFGLILNKTLGLEISDDIFPVDKVSNNNIRFCMGGPLQANQMMLLHSCSEIPEQTLEICPSVYLGGDLSFLQEIASSEAGPMINLCFGYSGWQAGQLEREFLDGNWFLAPASYEYVFTDSPENLWSMILKDLGGKYASLSTVPENLLLN.

It belongs to the UPF0301 (AlgH) family.

The polypeptide is UPF0301 protein CAB604 (Chlamydia abortus (strain DSM 27085 / S26/3) (Chlamydophila abortus)).